Reading from the N-terminus, the 253-residue chain is Protein PET20, mitochondrial (253 aa).

The N-terminal 36 residues, 1-36 (MLKLARPFIPPLSRNNAISSGIVLTSRRFQSSFTFL), are a transit peptide targeting the mitochondrion. The segment at 44–93 (KNQMKSKRKKGSKKAAYHRQPPEHEHTAPLIKQNKTITKKEHSDVRGSHL) is disordered. Residues 47–60 (MKSKRKKGSKKAAY) show a composition bias toward basic residues. Over residues 81–90 (TKKEHSDVRG) the composition is skewed to basic and acidic residues.

The protein localises to the mitochondrion. Its function is as follows. Required for respiratory growth, stability of the mitochondrial genome and for proper assembly or maintenance of mitochondrial proteins. The chain is Protein PET20, mitochondrial (PET20) from Saccharomyces cerevisiae (strain ATCC 204508 / S288c) (Baker's yeast).